We begin with the raw amino-acid sequence, 429 residues long: 3-phosphoshikimate 1-carboxyvinyltransferase (429 aa).

3-phosphoshikimate contacts are provided by K23, S24, and R28. K23 is a phosphoenolpyruvate binding site. Phosphoenolpyruvate contacts are provided by G95 and R123. Residues S168, Q170, D316, and K343 each contribute to the 3-phosphoshikimate site. Q170 is a binding site for phosphoenolpyruvate. The Proton acceptor role is filled by D316. Phosphoenolpyruvate contacts are provided by R347 and R389.

Belongs to the EPSP synthase family. In terms of assembly, monomer.

The protein localises to the cytoplasm. It carries out the reaction 3-phosphoshikimate + phosphoenolpyruvate = 5-O-(1-carboxyvinyl)-3-phosphoshikimate + phosphate. It participates in metabolic intermediate biosynthesis; chorismate biosynthesis; chorismate from D-erythrose 4-phosphate and phosphoenolpyruvate: step 6/7. Functionally, catalyzes the transfer of the enolpyruvyl moiety of phosphoenolpyruvate (PEP) to the 5-hydroxyl of shikimate-3-phosphate (S3P) to produce enolpyruvyl shikimate-3-phosphate and inorganic phosphate. In Bacillus cereus (strain G9842), this protein is 3-phosphoshikimate 1-carboxyvinyltransferase.